A 382-amino-acid polypeptide reads, in one-letter code: UDP-4-amino-4-deoxy-L-arabinose--oxoglutarate aminotransferase (382 aa).

The residue at position 183 (lysine 183) is an N6-(pyridoxal phosphate)lysine.

This sequence belongs to the DegT/DnrJ/EryC1 family. ArnB subfamily. As to quaternary structure, homodimer. Requires pyridoxal 5'-phosphate as cofactor.

The enzyme catalyses UDP-4-amino-4-deoxy-beta-L-arabinose + 2-oxoglutarate = UDP-beta-L-threo-pentopyranos-4-ulose + L-glutamate. It functions in the pathway nucleotide-sugar biosynthesis; UDP-4-deoxy-4-formamido-beta-L-arabinose biosynthesis; UDP-4-deoxy-4-formamido-beta-L-arabinose from UDP-alpha-D-glucuronate: step 2/3. The protein operates within bacterial outer membrane biogenesis; lipopolysaccharide biosynthesis. Catalyzes the conversion of UDP-4-keto-arabinose (UDP-Ara4O) to UDP-4-amino-4-deoxy-L-arabinose (UDP-L-Ara4N). The modified arabinose is attached to lipid A and is required for resistance to polymyxin and cationic antimicrobial peptides. The sequence is that of UDP-4-amino-4-deoxy-L-arabinose--oxoglutarate aminotransferase from Pseudomonas aeruginosa (strain ATCC 15692 / DSM 22644 / CIP 104116 / JCM 14847 / LMG 12228 / 1C / PRS 101 / PAO1).